The primary structure comprises 877 residues: Leucine--tRNA ligase (877 aa).

The 'HIGH' region motif lies at 48–58 (PYPSGKLHMGH). Residues 636–640 (KMSKS) carry the 'KMSKS' region motif. Residue lysine 639 participates in ATP binding.

It belongs to the class-I aminoacyl-tRNA synthetase family.

It localises to the cytoplasm. It carries out the reaction tRNA(Leu) + L-leucine + ATP = L-leucyl-tRNA(Leu) + AMP + diphosphate. The polypeptide is Leucine--tRNA ligase (Ralstonia pickettii (strain 12J)).